Here is a 271-residue protein sequence, read N- to C-terminus: Putative pyruvate, phosphate dikinase regulatory protein 1 (271 aa).

G156 to T163 serves as a coordination point for ADP.

This sequence belongs to the pyruvate, phosphate/water dikinase regulatory protein family. PDRP subfamily.

It carries out the reaction N(tele)-phospho-L-histidyl/L-threonyl-[pyruvate, phosphate dikinase] + ADP = N(tele)-phospho-L-histidyl/O-phospho-L-threonyl-[pyruvate, phosphate dikinase] + AMP + H(+). The enzyme catalyses N(tele)-phospho-L-histidyl/O-phospho-L-threonyl-[pyruvate, phosphate dikinase] + phosphate + H(+) = N(tele)-phospho-L-histidyl/L-threonyl-[pyruvate, phosphate dikinase] + diphosphate. In terms of biological role, bifunctional serine/threonine kinase and phosphorylase involved in the regulation of the pyruvate, phosphate dikinase (PPDK) by catalyzing its phosphorylation/dephosphorylation. In Staphylococcus saprophyticus subsp. saprophyticus (strain ATCC 15305 / DSM 20229 / NCIMB 8711 / NCTC 7292 / S-41), this protein is Putative pyruvate, phosphate dikinase regulatory protein 1.